We begin with the raw amino-acid sequence, 427 residues long: Probable protein phosphatase 2C 64 (427 aa).

The interval 1-36 (MGNCVARSGTAVDAGGDGGEDGKRRRRRWKAPREDQ) is disordered. Positions 53–331 (TATVYTQQGR…DDCAVVCLYL (279 aa)) constitute a PPM-type phosphatase domain. Mn(2+)-binding residues include aspartate 89, glycine 90, aspartate 276, and aspartate 322.

It belongs to the PP2C family. Mg(2+) is required as a cofactor. The cofactor is Mn(2+).

It catalyses the reaction O-phospho-L-seryl-[protein] + H2O = L-seryl-[protein] + phosphate. The catalysed reaction is O-phospho-L-threonyl-[protein] + H2O = L-threonyl-[protein] + phosphate. This chain is Probable protein phosphatase 2C 64, found in Oryza sativa subsp. japonica (Rice).